The chain runs to 144 residues: Deoxyuridine 5'-triphosphate nucleotidohydrolase (144 aa).

Residues arginine 63–glycine 65, asparagine 76, and threonine 80–aspartate 82 contribute to the substrate site.

Belongs to the dUTPase family. Mg(2+) serves as cofactor.

It catalyses the reaction dUTP + H2O = dUMP + diphosphate + H(+). It participates in pyrimidine metabolism; dUMP biosynthesis; dUMP from dCTP (dUTP route): step 2/2. Its function is as follows. This enzyme is involved in nucleotide metabolism: it produces dUMP, the immediate precursor of thymidine nucleotides and it decreases the intracellular concentration of dUTP so that uracil cannot be incorporated into DNA. This is Deoxyuridine 5'-triphosphate nucleotidohydrolase from Treponema denticola (strain ATCC 35405 / DSM 14222 / CIP 103919 / JCM 8153 / KCTC 15104).